We begin with the raw amino-acid sequence, 281 residues long: Bifunctional protein FolD 1 (281 aa).

NADP(+) is bound by residues 165–167 (GRS), Ser190, and Ile231.

Belongs to the tetrahydrofolate dehydrogenase/cyclohydrolase family. Homodimer.

The enzyme catalyses (6R)-5,10-methylene-5,6,7,8-tetrahydrofolate + NADP(+) = (6R)-5,10-methenyltetrahydrofolate + NADPH. It carries out the reaction (6R)-5,10-methenyltetrahydrofolate + H2O = (6R)-10-formyltetrahydrofolate + H(+). Its pathway is one-carbon metabolism; tetrahydrofolate interconversion. Catalyzes the oxidation of 5,10-methylenetetrahydrofolate to 5,10-methenyltetrahydrofolate and then the hydrolysis of 5,10-methenyltetrahydrofolate to 10-formyltetrahydrofolate. This is Bifunctional protein FolD 1 from Desulfitobacterium hafniense (strain Y51).